The primary structure comprises 519 residues: Major facilitator superfamily domain-containing protein 8 (519 aa).

Positions 1–25 (MANLGSEAEREPLLGPGSPGSREWS) are disordered. At 1–41 (MANLGSEAEREPLLGPGSPGSREWSEIETQEHYKSRWKSVR) the chain is on the cytoplasmic side. Residues 13–14 (LL) carry the Dileucine internalization motif motif. A helical transmembrane segment spans residues 42-62 (ILYLTMFLSSVGFSIVIMSIW). Over 63-75 (PYLQKIDQTADAS) the chain is Extracellular. The helical transmembrane segment at 76-96 (FLGWVIASYSLGQMVASPLFG) threads the bilayer. Residues 97–106 (LWSNYRPRKE) lie on the Cytoplasmic side of the membrane. The helical transmembrane segment at 107–127 (PLIVSISISVAANCLYAYVHV) threads the bilayer. Topologically, residues 128 to 140 (PAAHNKYYMLIAR) are extracellular. Residues 141-161 (GLVGFGAGNVAVVRSYIAGAT) form a helical membrane-spanning segment. At 162–174 (SLQERTNAMANTS) the chain is on the cytoplasmic side. The chain crosses the membrane as a helical span at residues 175–195 (TCQALGFILGPVFQTCFALIG). Over 196–212 (EKGVTWDIIKLQVNMYT) the chain is Extracellular. A helical membrane pass occupies residues 213–233 (APVLLAAFLGILNIILILFIL). Residues 234 to 267 (REHRVDDLGRQCKSVNFQEENTDEPQIPEGSIDQ) lie on the Cytoplasmic side of the membrane. Residues 268 to 288 (VAVVATNIVFFVVLFIFAVYE) form a helical membrane-spanning segment. Residues 289-310 (TILTPLTLDMYAWTQEQAVLYD) lie on the Extracellular side of the membrane. The chain crosses the membrane as a helical span at residues 311-331 (GILLVAFGVEAVLVFMGVKLL). Topologically, residues 332 to 338 (SKKIGER) are cytoplasmic. The chain crosses the membrane as a helical span at residues 339–359 (AILLGGFVVVWVGFFILLPWG). The Extracellular portion of the chain corresponds to 360-416 (NQFPKIQWEDLHNSSTPNTTFGEIIIGLWNSSREDHSEQPTGCPIEQTWCLYTPVIH). N-linked (GlcNAc...) asparagine glycans are attached at residues N372 and N377. The helical transmembrane segment at 417–439 (LAQFLTAAVLIGTGYPACSVMSY) threads the bilayer. At 440–452 (TLYSKVLGPKPQG) the chain is on the cytoplasmic side. The helical transmembrane segment at 453–473 (IYMGWLTTSGSAARILGPVFI) threads the bilayer. Residues 474–483 (SHVYTYLGPR) lie on the Extracellular side of the membrane. Residues 484–504 (WAFSLVCGIVVLTILLIGAVY) form a helical membrane-spanning segment. Residues 505–519 (KRLVAFSVRYMRIQE) lie on the Cytoplasmic side of the membrane.

Belongs to the major facilitator superfamily.

Its subcellular location is the endosome membrane. The protein resides in the lysosome membrane. It carries out the reaction chloride(in) = chloride(out). The enzyme catalyses iodide(out) = iodide(in). It catalyses the reaction fluoride(in) = fluoride(out). Outward-rectifying chloride channel involved in endolysosomal chloride homeostasis, membrane fusion and function. Conducts chloride currents up to hundreds of picoamperes. Regulates lysosomal calcium content by reducing the lysosomal membrane potential, thereby activating TRPML1 channel and further release of lysosomal calcium ions. Regulates the pH in endolysosomal compartments and may contribute to progressive acidification from endosome to lysosome. Permeable to other halides such as iodide and fluoride ions. The chain is Major facilitator superfamily domain-containing protein 8 from Mus musculus (Mouse).